We begin with the raw amino-acid sequence, 580 residues long: D-erythrulose kinase (580 aa).

Positions 7–327 (DPARFTEDML…WAAPADTPAY (321 aa)) constitute a DhaK domain. His217 acts as the Tele-hemiaminal-histidine intermediate in catalysis. A disordered region spans residues 329–360 (KGAAQQHVSGERRSEATARSASSGPKLAELSD). A DhaL domain is found at 368 to 570 (RLVARAFDAM…LALCARTVAD (203 aa)). ATP contacts are provided by residues 397–403 (DGDHGRG), 443–444 (TS), Gly485, Arg542, and 555–557 (DAG).

The catalysed reaction is D-erythrulose + ATP = D-erythrulose 4-phosphate + ADP + H(+). Its pathway is carbohydrate metabolism; erythritol degradation. It participates in carbohydrate metabolism; D-threitol degradation. Functionally, catalyzes the phosphorylation of D-erythrulose to D-erythrulose-4P. Involved in the degradation pathways of erythritol and D-threitol, that allow M.smegmatis to grow on these compounds as the sole carbon source. This Mycolicibacterium smegmatis (strain ATCC 700084 / mc(2)155) (Mycobacterium smegmatis) protein is D-erythrulose kinase.